The primary structure comprises 161 residues: Small ribosomal subunit protein bS6 (161 aa).

The segment at 107–161 (KGDERERGFRGPKPAGRFESGRGGAGGARRGYDDREEFRARNEREDGRDTDGEAE) is disordered. Basic and acidic residues predominate over residues 136-161 (RGYDDREEFRARNEREDGRDTDGEAE).

It belongs to the bacterial ribosomal protein bS6 family.

Binds together with bS18 to 16S ribosomal RNA. This Gluconacetobacter diazotrophicus (strain ATCC 49037 / DSM 5601 / CCUG 37298 / CIP 103539 / LMG 7603 / PAl5) protein is Small ribosomal subunit protein bS6.